A 100-amino-acid chain; its full sequence is Replication restart protein PriB (100 aa).

The 100-residue stretch at 1-100 (MTNRIELSGV…VLHADKISQI (100 aa)) folds into the SSB domain.

Belongs to the PriB family. In terms of assembly, homodimer. Interacts with PriA and DnaT. Component of the replication restart primosome. Primosome assembly occurs via a 'hand-off' mechanism. PriA binds to replication forks, subsequently PriB then DnaT bind; DnaT then displaces ssDNA to generate the helicase loading substrate.

In terms of biological role, involved in the restart of stalled replication forks, which reloads the replicative helicase on sites other than the origin of replication; the PriA-PriB pathway is the major replication restart pathway. During primosome assembly it facilitates complex formation between PriA and DnaT on DNA; stabilizes PriA on DNA. Stimulates the DNA unwinding activity of PriA helicase. The polypeptide is Replication restart protein PriB (Vibrio cholerae serotype O1 (strain ATCC 39315 / El Tor Inaba N16961)).